The sequence spans 313 residues: MIETEMTPRPPAIFIMGPTASGKTALAIALRERLPVELISVDSALIYRGMDIGTAKPSAEELAQAPHRLIDIRDPAEAYSAADFRADALKEMAAITAAGRIPLLVGGTMLYFKALLEGLSPLPPADPAVRERIEQQAAEQGWDVLHRQLQEIDPVAALRIHPNDPQRLSRALEVFFISGKTLTELTKISGESLPYHVHQFAIAPTSRELIHQRIELRYHQMLAAGFETEARALFARGDLHTDLPSIRCVGYRQMWSYLSGEISYDEMVYRGICATRQLAKRQMTWLRGWDSVHWLDSEKPGEALDSVIQVVSA.

ATP is bound at residue 17 to 24; the sequence is GPTASGKT. A substrate-binding site is contributed by 19 to 24; it reads TASGKT. Interaction with substrate tRNA regions lie at residues 42–45, 166–170, and 247–252; these read DSAL, QRLSR, and RCVGYR.

Belongs to the IPP transferase family. In terms of assembly, monomer. The cofactor is Mg(2+).

It catalyses the reaction adenosine(37) in tRNA + dimethylallyl diphosphate = N(6)-dimethylallyladenosine(37) in tRNA + diphosphate. Its function is as follows. Catalyzes the transfer of a dimethylallyl group onto the adenine at position 37 in tRNAs that read codons beginning with uridine, leading to the formation of N6-(dimethylallyl)adenosine (i(6)A). The sequence is that of tRNA dimethylallyltransferase from Serratia proteamaculans (strain 568).